Consider the following 287-residue polypeptide: Bifunctional protein FolD (287 aa).

NADP(+)-binding positions include 164–166, serine 189, and isoleucine 230; that span reads GSS.

It belongs to the tetrahydrofolate dehydrogenase/cyclohydrolase family. In terms of assembly, homodimer.

It catalyses the reaction (6R)-5,10-methylene-5,6,7,8-tetrahydrofolate + NADP(+) = (6R)-5,10-methenyltetrahydrofolate + NADPH. The enzyme catalyses (6R)-5,10-methenyltetrahydrofolate + H2O = (6R)-10-formyltetrahydrofolate + H(+). Its pathway is one-carbon metabolism; tetrahydrofolate interconversion. Its function is as follows. Catalyzes the oxidation of 5,10-methylenetetrahydrofolate to 5,10-methenyltetrahydrofolate and then the hydrolysis of 5,10-methenyltetrahydrofolate to 10-formyltetrahydrofolate. The polypeptide is Bifunctional protein FolD (Aliarcobacter butzleri (strain RM4018) (Arcobacter butzleri)).